Reading from the N-terminus, the 92-residue chain is Small ribosomal subunit protein uS19c (92 aa).

It belongs to the universal ribosomal protein uS19 family.

The protein resides in the plastid. It is found in the chloroplast. Its function is as follows. Protein S19 forms a complex with S13 that binds strongly to the 16S ribosomal RNA. The polypeptide is Small ribosomal subunit protein uS19c (Rhodomonas salina (Cryptomonas salina)).